A 95-amino-acid polypeptide reads, in one-letter code: Aspartyl/glutamyl-tRNA(Asn/Gln) amidotransferase subunit C (95 aa).

Belongs to the GatC family. In terms of assembly, heterotrimer of A, B and C subunits.

It carries out the reaction L-glutamyl-tRNA(Gln) + L-glutamine + ATP + H2O = L-glutaminyl-tRNA(Gln) + L-glutamate + ADP + phosphate + H(+). The catalysed reaction is L-aspartyl-tRNA(Asn) + L-glutamine + ATP + H2O = L-asparaginyl-tRNA(Asn) + L-glutamate + ADP + phosphate + 2 H(+). In terms of biological role, allows the formation of correctly charged Asn-tRNA(Asn) or Gln-tRNA(Gln) through the transamidation of misacylated Asp-tRNA(Asn) or Glu-tRNA(Gln) in organisms which lack either or both of asparaginyl-tRNA or glutaminyl-tRNA synthetases. The reaction takes place in the presence of glutamine and ATP through an activated phospho-Asp-tRNA(Asn) or phospho-Glu-tRNA(Gln). The polypeptide is Aspartyl/glutamyl-tRNA(Asn/Gln) amidotransferase subunit C (Rhodopseudomonas palustris (strain BisB5)).